A 131-amino-acid polypeptide reads, in one-letter code: Ribosome-binding factor A (131 aa).

It belongs to the RbfA family. As to quaternary structure, monomer. Binds 30S ribosomal subunits, but not 50S ribosomal subunits or 70S ribosomes.

It localises to the cytoplasm. Functionally, one of several proteins that assist in the late maturation steps of the functional core of the 30S ribosomal subunit. Associates with free 30S ribosomal subunits (but not with 30S subunits that are part of 70S ribosomes or polysomes). Required for efficient processing of 16S rRNA. May interact with the 5'-terminal helix region of 16S rRNA. This Thermotoga maritima (strain ATCC 43589 / DSM 3109 / JCM 10099 / NBRC 100826 / MSB8) protein is Ribosome-binding factor A.